The primary structure comprises 394 residues: Elongation factor Tu 1 (394 aa).

Residues lysine 10–glutamate 204 form the tr-type G domain. The G1 stretch occupies residues glycine 19–threonine 26. Glycine 19–threonine 26 contacts GTP. Threonine 26 contributes to the Mg(2+) binding site. Residues glycine 60–asparagine 64 are G2. Residues aspartate 81–glycine 84 are G3. Residues aspartate 81 to histidine 85 and asparagine 136 to aspartate 139 contribute to the GTP site. The G4 stretch occupies residues asparagine 136–aspartate 139. Residues serine 174 to leucine 176 are G5.

Belongs to the TRAFAC class translation factor GTPase superfamily. Classic translation factor GTPase family. EF-Tu/EF-1A subfamily. Monomer.

It is found in the cytoplasm. The enzyme catalyses GTP + H2O = GDP + phosphate + H(+). In terms of biological role, GTP hydrolase that promotes the GTP-dependent binding of aminoacyl-tRNA to the A-site of ribosomes during protein biosynthesis. The sequence is that of Elongation factor Tu 1 from Shigella sonnei (strain Ss046).